The following is a 128-amino-acid chain: Large ribosomal subunit protein bL17 (128 aa).

It belongs to the bacterial ribosomal protein bL17 family. Part of the 50S ribosomal subunit. Contacts protein L32.

The chain is Large ribosomal subunit protein bL17 from Streptococcus gordonii (strain Challis / ATCC 35105 / BCRC 15272 / CH1 / DL1 / V288).